The following is a 488-amino-acid chain: 3-octaprenyl-4-hydroxybenzoate carboxy-lyase (488 aa).

Asparagine 172 is a binding site for Mn(2+). Prenylated FMN-binding positions include isoleucine 175–arginine 177, arginine 189–leucine 191, and arginine 194–glycine 195. Glutamate 238 is a Mn(2+) binding site. Aspartate 287 (proton donor) is an active-site residue.

The protein belongs to the UbiD family. Homohexamer. Prenylated FMN is required as a cofactor. It depends on Mn(2+) as a cofactor.

The protein localises to the cell membrane. It catalyses the reaction a 4-hydroxy-3-(all-trans-polyprenyl)benzoate + H(+) = a 2-(all-trans-polyprenyl)phenol + CO2. Its pathway is cofactor biosynthesis; ubiquinone biosynthesis. Functionally, catalyzes the decarboxylation of 3-octaprenyl-4-hydroxy benzoate to 2-octaprenylphenol, an intermediate step in ubiquinone biosynthesis. The chain is 3-octaprenyl-4-hydroxybenzoate carboxy-lyase from Shewanella oneidensis (strain ATCC 700550 / JCM 31522 / CIP 106686 / LMG 19005 / NCIMB 14063 / MR-1).